An 820-amino-acid polypeptide reads, in one-letter code: MKMLLLLHCLGVFLSCSGHIQDEHPQYHSPPDVVIPVRITGTTRGMTPPGWLSYILPFGGQKHIIHIKVKKLLFSKHLPVFTYTDQGAILEDQPFVQNNCYYHGYVEGDPESLVSLSTCFGGFQGILQINDFAYEIKPLAFSTTFEHLVYKMDSEEKQFSTMRSGFMQNEITCRMEFEEIDNSTQKQSSYVGWWIHFRIVEIVVVIDNYLYIRYERNDSKLLEDLYVIVNIVDSILDVIGVKVLLFGLEIWTNKNLIVVDDVRKSVHLYCKWKSENITPRMQHDTSHLFTTLGLRGLSGIGAFRGMCTPHRSCAIVTFMNKTLGTFSIAVAHHLGHNLGMNHDEDTCRCSQPRCIMHEGNPPITKFSNCSYGDFWEYTVERTKCLLETVHTKDIFNVKRCGNGVVEEGEECDCGPLKHCAKDPCCLSNCTLTDGSTCAFGLCCKDCKFLPSGKVCRKEVNECDLPEWCNGTSHKCPDDFYVEDGIPCKERGYCYEKSCHDRNEQCRRIFGAGANTASETCYKELNTLGDRVGHCGIKNATYIKCNISDVQCGRIQCENVTEIPNMSDHTTVHWARFNDIMCWSTDYHLGMKGPDIGEVKDGTECGIDHICIHRHCVHITILNSNCSPAFCNKRGICNNKHHCHCNYLWDPPNCLIKGYGGSVDSGPPPKRKKKKKFCYLCILLLIVLFILLCCLYRLCKKSKPIKKQQDVQTPSAKEEEKIQRRPHELPPQSQPWVMPSQSQPPVTPSQSHPQVMPSQSQPPVTPSQSQPRVMPSQSQPPVMPSQSHPQLTPSQSQPPVTPSQRQPQLMPSQSQPPVTPS.

The first 18 residues, 1 to 18 (MKMLLLLHCLGVFLSCSG), serve as a signal peptide directing secretion. The propeptide occupies 19–193 (HIQDEHPQYH…TQKQSSYVGW (175 aa)). Over 194 to 674 (WIHFRIVEIV…GPPPKRKKKK (481 aa)) the chain is Extracellular. One can recognise a Peptidase M12B domain in the interval 198-390 (RIVEIVVVID…RTKCLLETVH (193 aa)). N-linked (GlcNAc...) asparagine glycans are attached at residues N217 and N320. 3 disulfides stabilise this stretch: C307–C384, C347–C369, and C349–C354. N-linked (GlcNAc...) asparagine glycans are attached at residues N368, N428, N469, N538, N545, N558, and N564. Positions 397–483 (VKRCGNGVVE…KCPDDFYVED (87 aa)) constitute a Disintegrin domain. C455 and C475 form a disulfide bridge. 3 disulfides stabilise this stretch: C625-C636, C630-C642, and C644-C653. Residues 625–654 (CSPAFCNKRGICNNKHHCHCNYLWDPPNCL) enclose the EGF-like domain. The helical transmembrane segment at 675-695 (KFCYLCILLLIVLFILLCCLY) threads the bilayer. Over 696 to 820 (RLCKKSKPIK…SQSQPPVTPS (125 aa)) the chain is Cytoplasmic. The interval 706 to 820 (KQQDVQTPSA…SQSQPPVTPS (115 aa)) is disordered. Residues 715-727 (AKEEEKIQRRPHE) are compositionally biased toward basic and acidic residues. The span at 738-820 (PSQSQPPVTP…SQSQPPVTPS (83 aa)) shows a compositional bias: low complexity. 9 consecutive repeat copies span residues 739 to 747 (SQSQPPVTP), 748 to 756 (SQSHPQVMP), 757 to 765 (SQSQPPVTP), 766 to 774 (SQSQPRVMP), 775 to 783 (SQSQPPVMP), 784 to 792 (SQSHPQLTP), 793 to 801 (SQSQPPVTP), 802 to 810 (SQRQPQLMP), and 811 to 819 (SQSQPPVTP). A 9 X 9 AA approximate repeats region spans residues 739-819 (SQSQPPVTPS…PSQSQPPVTP (81 aa)).

As to expression, expressed specifically in testes.

The protein localises to the membrane. Functionally, may be involved in spermatogenesis and fertilization. Seems to be a non catalytic metalloprotease-like protein. This Homo sapiens (Human) protein is Disintegrin and metalloproteinase domain-containing protein 29 (ADAM29).